A 747-amino-acid chain; its full sequence is Pyrin (747 aa).

The Pyrin domain occupies Met1 to Pro92. A disordered region spans residues Ala89–Arg181. Over residues Pro122 to Asp135 the composition is skewed to acidic residues. Positions 442, 445, 465, and 471 each coordinate Zn(2+). The B box-type zinc-finger motif lies at Cys442–Ile479. Residues Ile479–Lys508 adopt a coiled-coil conformation. Residues Lys487–Met645 are required for homotrimerization and induction of pyroptosomes. A disordered region spans residues Glu698 to Gln720.

As to quaternary structure, homotrimer. Interacts (via the B box-type zinc finger) with PSTPIP1. Interacts (via the B30.2/SPRY domain) with several components of the inflammasome complex, including CASP1 p20 and p10 subunits, CASP5, PYCARD, NLRP1, NLRP2 and NLRP3, as well as with unprocessed IL1B; this interaction may lead to autophagic degradation of these proteins. Component of the AIM2 PANoptosome complex, a multiprotein complex that drives inflammatory cell death (PANoptosis). Interacts with NFKBIA and RELA. Interacts weakly with VASP and ACTR3. Interacts with active ULK1 (phosphorylated on 'Ser-317') and BECN1 simultaneously. Also interacts with ATG16L1 (via WD repeats), and with ATG8 family members, including GABARAP, GABARAPL1 and, to a lesser extent, GABARAPL2, MAP1LC3A/LC3A and MAP1LC3C/LC3C. Interacts with TRIM21. Interacts with YWHAB, YWHAE, YWHAG, YWHAH, YWHAQ and YWHAZ; the interaction is required for the down-regulation of pyrin pro-inflammatory activity. In terms of processing, degraded along with the delivery of its substrates to autolysosomal compartments (at protein level). Expressed in spleen and, to a lesser degree in the lung. Not expressed in thymus, testis, ovary, heart, brain, liver, kidney and muscle.

It is found in the cytoplasm. It localises to the cytoskeleton. The protein localises to the cell projection. Its subcellular location is the ruffle. The protein resides in the lamellipodium. It is found in the cytoplasmic vesicle. It localises to the autophagosome. The protein localises to the nucleus. In terms of biological role, involved in the regulation of innate immunity and the inflammatory response in response to IFNG/IFN-gamma. Organizes autophagic machinery by serving as a platform for the assembly of ULK1, Beclin 1/BECN1, ATG16L1, and ATG8 family members and recognizes specific autophagy targets, thus coordinating target recognition with assembly of the autophagic apparatus and initiation of autophagy. Acts as an autophagy receptor for the degradation of several inflammasome components, including CASP1, NLRP1 and NLRP3, hence preventing excessive IL1B- and IL18-mediated inflammation. However, it can also have a positive effect in the inflammatory pathway, acting as an innate immune sensor that triggers PYCARD/ASC specks formation, caspase-1 activation, and IL1B and IL18 production. Together with AIM2, also acts as a mediator of pyroptosis, necroptosis and apoptosis (PANoptosis), an integral part of host defense against pathogens, in response to bacterial infection. It is required for PSTPIP1-induced PYCARD/ASC oligomerization and inflammasome formation. Recruits PSTPIP1 to inflammasomes, and is required for PSTPIP1 oligomerization. The sequence is that of Pyrin from Rattus norvegicus (Rat).